A 303-amino-acid polypeptide reads, in one-letter code: Holdfast attachment protein D (303 aa).

A compositionally biased stretch (polar residues) spans S266–F281. The disordered stretch occupies residues S266 to R303. Low complexity predominate over residues R282 to R303.

It is found in the cell outer membrane. Its function is as follows. Involved in attachment of the holdfast to the cell. The holdfast is a structure that allows the bacteria to firmly adhere to surfaces. This Caulobacter vibrioides (strain ATCC 19089 / CIP 103742 / CB 15) (Caulobacter crescentus) protein is Holdfast attachment protein D (hfaD).